The primary structure comprises 336 residues: Nuclear egress protein 2 (336 aa).

Residues 1–315 (MASPEERLLD…AWRYSWRATP (315 aa)) lie on the Perinuclear space side of the membrane. Disordered stretches follow at residues 193–221 (RSGQVEDTGARVTGGGGPRPGVTHSGCLG) and 277–297 (RTRETRRMRGSHSRVEHVPPE). Positions 277 to 288 (RTRETRRMRGSH) are enriched in basic residues. Residues 316–333 (YLARVLAVTAVALLLMFL) traverse the membrane as a helical segment. Over 334-336 (RWT) the chain is Nuclear.

It belongs to the herpesviridae NEC2 protein family. In terms of assembly, forms a heterodimeric viral nuclear egress complex (NEC) with NEC1. Interacts with host IKBKE; this interaction inhibits host IKBKE kinase activity and IRF3 nuclear translocation. In terms of processing, phosphorylated.

It is found in the host nucleus inner membrane. The protein resides in the host cytoplasm. It localises to the host perinuclear region. Its function is as follows. Plays an essential role in virion nuclear egress, the first step of virion release from infected cell. Within the host nucleus, NEC1 interacts with the newly formed capsid through the vertexes and directs it to the inner nuclear membrane by associating with NEC2. Induces the budding of the capsid at the inner nuclear membrane as well as its envelopment into the perinuclear space. There, the NEC1/NEC2 complex promotes the fusion of the enveloped capsid with the outer nuclear membrane and the subsequent release of the viral capsid into the cytoplasm where it will reach the secondary budding sites in the host Golgi or trans-Golgi network. Inhibits host IKBKE and IRF3, thereby impairing type I IFN signaling. This Homo sapiens (Human) protein is Nuclear egress protein 2.